Here is a 1167-residue protein sequence, read N- to C-terminus: MSSNLAFLSLSLAESTASLGKSLEETRTRLTEKLKLVAGMALGFDQFAMHQTATGPGLSVEGKQTEQMSRKSAEDTRASSLSSDPDDGRAAQLAGQKGHVTPCIAGLIATSNPFLFTHMLALGAAYLGYDKYFGDGTSELLPFYGTRTLLSTLSPLDTPRLLDSMAAADRLSPKRSILSRFSRRKRSLDAPAPEPSGWDQKRKSRLPLGSLRLVLDILDRHLEALTTYVQQQIEIFRQAGVPLEASVTMTHNLNRLHVTRCQSRNNQMVIPCRWKDTTFFEELSNETNPGLTDEEQLEKRVKFHKLENAFNTVTGLGALEAMLDEDSVLLGGPAEESVARLYSDFHLGAAMNNWYFYDALNINKMLSRFQKVGTKVLKQYGLENLMNLATSHQAGSTASWDRTDIDTKLAKHHHYGSALRVRLYIMALLPQFTPHREGILSPVDFIREAFAGERSYAMSTARLKPLLSDDLVILGVPKGFSFLWLFEFLLEEDSPNALVAKRRALKRIPNWTKRLFSHSRSIPMLFRQFYKALNAGVFAKARRRTLDRSKTLLSRQLPEGWRDIVMDAFAFTAHSAALMQVVNYHSLFRDRTLNDLQEASYLATPPAFSIEDQSVMKRCDEQIYEWSRFGFSPDVLEADLHNETFKGKWENLRLETMPTPDTHQWWRRLHRAILDSLEIYQAHERHLKGMSDNLYTLVEDTIKNLQDGSSRDDTIFFGRIARGARESVGQKMWRGVKTFFLDLVRDVPGSDHAVWFGVGFNFPRIFQILRKMKEIALHAAGDQGSAILLDEAFVELVQETVAVRAQTYRRQPPTTLRNIGVIGLRPDYANLDTEQRSMEYQLSMCADHCVSLWVQILGFIYPYVLNPSLLTDYEKSFGTGHAIKKLDDPSYVNSFRYIFANDASLNFFEHNTPQDTRKALVSLKSGQAFMYANMMRFAGIAFEQLSMPYLAVSLQRQAPFMGQMVKDWVAKRSRSRKLAIVSVLSLGLIFAYTLLSALDIAQFLTDSGMKAIEDCSWNPIMQQMACVVVAGSGSLVAPTFAALSDVFKVGLYSGIGSTLIAASVVGNAYMIIRSQSRTILRTEMAIKNVAVKLWKQMRKYFSWVTRFTKRRKAILSTMMARATALAKNKKPRSETAATMTRSGDSVMDMLLQGVSPATPQRAQDGSR.

The N-terminal stretch at 1–20 (MSSNLAFLSLSLAESTASLG) is a signal peptide. At 21-977 (KSLEETRTRL…WVAKRSRSRK (957 aa)) the chain is on the cytoplasmic side. The tract at residues 55–94 (GPGLSVEGKQTEQMSRKSAEDTRASSLSSDPDDGRAAQLA) is disordered. The span at 68–77 (MSRKSAEDTR) shows a compositional bias: basic and acidic residues. The chain crosses the membrane as a helical span at residues 978–998 (LAIVSVLSLGLIFAYTLLSAL). Over 999 to 1167 (DIAQFLTDSG…TPQRAQDGSR (169 aa)) the chain is Extracellular. Cysteine 1015 and cysteine 1026 are disulfide-bonded.

This sequence belongs to the apicomplexan parasites RON2 family.

The protein resides in the secreted. Its subcellular location is the host cell membrane. In terms of biological role, may play a role in host cell invasion. The polypeptide is Rhoptry neck protein 2-like protein 2 (RON2L2) (Toxoplasma gondii (strain ATCC 50611 / Me49)).